We begin with the raw amino-acid sequence, 311 residues long: tRNA pseudouridine synthase B (311 aa).

Catalysis depends on Asp49, which acts as the Nucleophile.

The protein belongs to the pseudouridine synthase TruB family. Type 1 subfamily.

The enzyme catalyses uridine(55) in tRNA = pseudouridine(55) in tRNA. Functionally, responsible for synthesis of pseudouridine from uracil-55 in the psi GC loop of transfer RNAs. The polypeptide is tRNA pseudouridine synthase B (Actinobacillus succinogenes (strain ATCC 55618 / DSM 22257 / CCUG 43843 / 130Z)).